We begin with the raw amino-acid sequence, 157 residues long: Endoribonuclease YbeY (157 aa).

Positions 113, 117, and 123 each coordinate Zn(2+).

Belongs to the endoribonuclease YbeY family. The cofactor is Zn(2+).

It is found in the cytoplasm. Single strand-specific metallo-endoribonuclease involved in late-stage 70S ribosome quality control and in maturation of the 3' terminus of the 16S rRNA. The chain is Endoribonuclease YbeY from Ehrlichia ruminantium (strain Gardel).